Here is a 418-residue protein sequence, read N- to C-terminus: UDP-N-acetylglucosamine 1-carboxyvinyltransferase (418 aa).

22-23 (KN) contributes to the phosphoenolpyruvate binding site. Arg-92 is a UDP-N-acetyl-alpha-D-glucosamine binding site. The active-site Proton donor is the Cys-116. Cys-116 carries the post-translational modification 2-(S-cysteinyl)pyruvic acid O-phosphothioketal. UDP-N-acetyl-alpha-D-glucosamine is bound by residues 121–125 (RPIDL), Asp-305, and Leu-327.

This sequence belongs to the EPSP synthase family. MurA subfamily.

It is found in the cytoplasm. It carries out the reaction phosphoenolpyruvate + UDP-N-acetyl-alpha-D-glucosamine = UDP-N-acetyl-3-O-(1-carboxyvinyl)-alpha-D-glucosamine + phosphate. It functions in the pathway cell wall biogenesis; peptidoglycan biosynthesis. Its function is as follows. Cell wall formation. Adds enolpyruvyl to UDP-N-acetylglucosamine. The chain is UDP-N-acetylglucosamine 1-carboxyvinyltransferase from Campylobacter jejuni subsp. jejuni serotype O:23/36 (strain 81-176).